The chain runs to 97 residues: YcgL domain-containing protein CKO_01183 (97 aa).

The YcgL domain maps to 1-85 (MFCVIYRSSK…PPEDLLKQHL (85 aa)). Residues 74–97 (PPPPEDLLKQHLSAPGENKPDAKS) form a disordered region.

The sequence is that of YcgL domain-containing protein CKO_01183 from Citrobacter koseri (strain ATCC BAA-895 / CDC 4225-83 / SGSC4696).